The primary structure comprises 265 residues: Interleukin-2 receptor subunit alpha (265 aa).

Residues 1-21 form the signal peptide; sequence MDSYLLMWGLLTLIMVPGCFA. Residues 22 to 84 enclose the Sushi 1 domain; it reads ELCDDDPPEI…SWDNQCQCTS (63 aa). The Extracellular segment spans residues 22 to 240; sequence ELCDDDPPEI…ETFIFTTEYQ (219 aa). Intrachain disulfides connect Cys-24–Cys-67, Cys-49–Cys-80, and Cys-51–Cys-82. 2 N-linked (GlcNAc...) asparagine glycosylation sites follow: Asn-70 and Asn-89. The segment covering 87 to 98 has biased composition (polar residues); it reads TRNTTKQVTPQP. The segment at 87 to 123 is disordered; the sequence is TRNTTKQVTPQPEEQKERKTTEMQSPMQPVDQASLPG. Residues 123-186 form the Sushi 2 domain; the sequence is GHCREPPPWE…WTQPQLICTG (64 aa). 2 disulfide bridges follow: Cys-125–Cys-168 and Cys-152–Cys-184. Residues 190-210 are disordered; the sequence is TSQFPGEEKPQASPEGRPESE. A compositionally biased stretch (basic and acidic residues) spans 195 to 209; the sequence is GEEKPQASPEGRPES. A helical transmembrane segment spans residues 241-259; that stretch reads VAVAGCVFLLISVLLLSGL. The Cytoplasmic portion of the chain corresponds to 260 to 265; it reads TWQRRQ.

Non-covalent dimer of an alpha and a beta subunit. IL2R exists in 3 different forms: a high affinity dimer, an intermediate affinity monomer (beta subunit), and a low affinity monomer (alpha subunit). The high and intermediate affinity forms also associate with a gamma subunit.

It localises to the membrane. Its function is as follows. Receptor for interleukin-2. The receptor is involved in the regulation of immune tolerance by controlling regulatory T cells (TREGs) activity. TREGs suppress the activation and expansion of autoreactive T-cells. The sequence is that of Interleukin-2 receptor subunit alpha (IL2RA) from Pan troglodytes (Chimpanzee).